Here is a 356-residue protein sequence, read N- to C-terminus: Glucan endo-1,3-beta-glucosidase, acidic isoform GL153 (356 aa).

A signal peptide spans 1–29; that stretch reads MALCIKNGFLAAALVLVGLLMCSIQMIGA. Glutamine 30 is modified (pyrrolidone carboxylic acid). Asparagine 95 carries an N-linked (GlcNAc...) asparagine glycan. Glutamate 124 acts as the Proton donor in catalysis. Glutamate 264 acts as the Nucleophile in catalysis.

The protein belongs to the glycosyl hydrolase 17 family. As to expression, is expressed primarily in epidermal cell of healthy plant, and following induction by ethylene, accumulates in mesophyll cells.

It is found in the secreted. The protein localises to the extracellular space. It catalyses the reaction Hydrolysis of (1-&gt;3)-beta-D-glucosidic linkages in (1-&gt;3)-beta-D-glucans.. Is thought to be an important plant defense-related product against fungal pathogens. The protein is Glucan endo-1,3-beta-glucosidase, acidic isoform GL153 (GGL4) of Nicotiana tabacum (Common tobacco).